We begin with the raw amino-acid sequence, 39 residues long: Contryphan-Cal3 (39 aa).

An N-terminal signal peptide occupies residues 1–20; that stretch reads MTRTAVLLLTLLFLVAMAAS. The cysteines at positions 29 and 35 are disulfide-linked.

As to expression, expressed by the venom duct.

The protein localises to the secreted. Probable neurotoxin. The chain is Contryphan-Cal3 from Californiconus californicus (California cone).